A 247-amino-acid chain; its full sequence is DNA polymerase sliding clamp (247 aa).

This sequence belongs to the PCNA family. Homotrimer. The subunits circularize to form a toroid; DNA passes through its center. Replication factor C (RFC) is required to load the toroid on the DNA.

In terms of biological role, sliding clamp subunit that acts as a moving platform for DNA processing. Responsible for tethering the catalytic subunit of DNA polymerase and other proteins to DNA during high-speed replication. The polypeptide is DNA polymerase sliding clamp (Methanospirillum hungatei JF-1 (strain ATCC 27890 / DSM 864 / NBRC 100397 / JF-1)).